Consider the following 323-residue polypeptide: Magnesium transporter NIPA1 (323 aa).

At 1–21 (MGTAAAAAAAGEGARGPSPAA) the chain is on the extracellular side. The helical transmembrane segment at 22-42 (VSLGLGVAVVSSLVNGSTFVL) threads the bilayer. At 43 to 60 (QKKGIVRAKRRGTSYLTD) the chain is on the cytoplasmic side. Residues 61-81 (IVWWAGTIAMAVGQIGNFLAY) traverse the membrane as a helical segment. A topological domain (extracellular) is located at residue Thr-82. Residues 83-103 (AVPTVLVTPLGALGVPFGSIL) form a helical membrane-spanning segment. The Cytoplasmic portion of the chain corresponds to 104 to 111 (ASYLLKEK). Residues 112 to 132 (LNILGKLGCLLSCAGSVVLII) traverse the membrane as a helical segment. Over 133–153 (HSPKSESVTTQAELEEKLTNP) the chain is Extracellular. Residues 154–174 (VFVGYLCIVLLMLLLLIFWIA) form a helical membrane-spanning segment. Topologically, residues 175–177 (PAH) are cytoplasmic. The chain crosses the membrane as a helical span at residues 178–198 (GPTNIMVYISICSLLGSFTVP). Over 199 to 218 (STKGIGLAAQDILHNNPSSQ) the chain is Extracellular. The chain crosses the membrane as a helical span at residues 219-239 (RALCLCLVLLAVLGCSIIVQF). Over 240–253 (RYINKALECFDSSV) the chain is Cytoplasmic. A helical transmembrane segment spans residues 254–274 (FGAIYYVVFTTLVLLASAILF). Residues 275–284 (REWSNVGLVD) are Extracellular-facing. A helical membrane pass occupies residues 285–305 (FLGMACGFTTVSVGIVLIQVF). Residues 306–323 (KEFNFNLGEMNKSNMKTD) are Cytoplasmic-facing.

The protein belongs to the NIPA family. Homodimer. In terms of tissue distribution, widely expressed. Predominantly expressed in neuronal tissues. Brain, heart, kidney, liver and colon (at protein level).

It localises to the cell membrane. Its subcellular location is the early endosome. The catalysed reaction is Mg(2+)(in) = Mg(2+)(out). Functionally, acts as a Mg(2+) transporter. Can also transport other divalent cations such as Fe(2+), Sr(2+), Ba(2+), Zn(2+) and Co(2+) but to a much less extent than Mg(2+). The sequence is that of Magnesium transporter NIPA1 (Nipa1) from Mus musculus (Mouse).